The chain runs to 300 residues: 5'-adenylylsulfate reductase-like 5 (300 aa).

Positions 1 to 23 are cleaved as a signal peptide; it reads MDSRVSILFVCAIAVSCFTSGSA. In terms of domain architecture, Thioredoxin spans 41 to 161; that stretch reads FDLEAKCPPS…LIEFYEEATG (121 aa). Asn136 is a glycosylation site (N-linked (GlcNAc...) asparagine). A helical membrane pass occupies residues 202–222; sequence FLVLSLLFICLQMAILVFPIA.

It localises to the membrane. This is 5'-adenylylsulfate reductase-like 5 (APRL5) from Arabidopsis thaliana (Mouse-ear cress).